Reading from the N-terminus, the 508-residue chain is Zinc finger CCCH-type with G patch domain-containing protein (508 aa).

The disordered stretch occupies residues 67–86 (QQESSHHDSGTPETDTKTSV). The span at 69 to 86 (ESSHHDSGTPETDTKTSV) shows a compositional bias: basic and acidic residues. A C3H1-type zinc finger spans residues 161–188 (RSMVPCPYFLEGKCKFAGAECRFSHGYL). Residues 253–282 (IYPLGPEEVESDSESDSQSDTGDSSSSKAA) form a disordered region. Positions 259 to 269 (EEVESDSESDS) are enriched in acidic residues. A compositionally biased stretch (low complexity) spans 270 to 279 (QSDTGDSSSS). The 47-residue stretch at 310-356 (TKGIGSKLMAKMGYIFGKGLGKDGEGRVEPIEVVVLPQGKSLDKCAE) folds into the G-patch domain. The tract at residues 404–426 (SLHDLRVSHPGAKPDIRKTRKSA) is disordered.

It is found in the nucleus. Transcription repressor. This chain is Zinc finger CCCH-type with G patch domain-containing protein, found in Nematostella vectensis (Starlet sea anemone).